The primary structure comprises 144 residues: Putative protein PHLOEM PROTEIN 2-LIKE B4 (144 aa).

This Arabidopsis thaliana (Mouse-ear cress) protein is Putative protein PHLOEM PROTEIN 2-LIKE B4 (PP2B4).